The following is a 201-amino-acid chain: Holliday junction branch migration complex subunit RuvA (201 aa).

The segment at 1-63 (MYDYIKGTVT…EDNISLFGFQ (63 aa)) is domain I. The domain II stretch occupies residues 64 to 142 (TTEERYLFKK…DVVASEIVYV (79 aa)). Positions 143–153 (APENDMVAGLS) are flexible linker. Residues 153–201 (SPQLEEAVLALEALGYSTRELKKVIPKLAKEADLTSDAYIKLALQLMTK) are domain III.

Belongs to the RuvA family. Homotetramer. Forms an RuvA(8)-RuvB(12)-Holliday junction (HJ) complex. HJ DNA is sandwiched between 2 RuvA tetramers; dsDNA enters through RuvA and exits via RuvB. An RuvB hexamer assembles on each DNA strand where it exits the tetramer. Each RuvB hexamer is contacted by two RuvA subunits (via domain III) on 2 adjacent RuvB subunits; this complex drives branch migration. In the full resolvosome a probable DNA-RuvA(4)-RuvB(12)-RuvC(2) complex forms which resolves the HJ.

It is found in the cytoplasm. In terms of biological role, the RuvA-RuvB-RuvC complex processes Holliday junction (HJ) DNA during genetic recombination and DNA repair, while the RuvA-RuvB complex plays an important role in the rescue of blocked DNA replication forks via replication fork reversal (RFR). RuvA specifically binds to HJ cruciform DNA, conferring on it an open structure. The RuvB hexamer acts as an ATP-dependent pump, pulling dsDNA into and through the RuvAB complex. HJ branch migration allows RuvC to scan DNA until it finds its consensus sequence, where it cleaves and resolves the cruciform DNA. The polypeptide is Holliday junction branch migration complex subunit RuvA (Listeria monocytogenes serovar 1/2a (strain ATCC BAA-679 / EGD-e)).